The primary structure comprises 127 residues: Glycine cleavage system H protein (127 aa).

The Lipoyl-binding domain maps to 22 to 104; it reads KVRIGITDFA…YEKAWMIVIE (83 aa). Lys-63 bears the N6-lipoyllysine mark.

Belongs to the GcvH family. As to quaternary structure, the glycine cleavage system is composed of four proteins: P, T, L and H. Requires (R)-lipoate as cofactor.

Its function is as follows. The glycine cleavage system catalyzes the degradation of glycine. The H protein shuttles the methylamine group of glycine from the P protein to the T protein. In terms of biological role, is also involved in protein lipoylation via its role as an octanoyl/lipoyl carrier protein intermediate. The sequence is that of Glycine cleavage system H protein from Geobacillus thermodenitrificans (strain NG80-2).